Consider the following 826-residue polypeptide: U4/U6 snRNA-associated-splicing factor PRP24 (826 aa).

RRM domains are found at residues 310 to 385, 386 to 463, 477 to 554, and 598 to 670; these read TSVF…EAAG, ITLY…YSDP, REVH…LSVS, and RSFA…AVPQ.

The protein localises to the nucleus. Functionally, functions as a recycling factor of the spliceosome, a machinery that forms on each precursor-messenger RNA (pre-mRNA) and catalyzes the removal of introns. Chaperones the re-annealing of U4 and U6 snRNAs (small nuclear RNAs) released from previous rounds of splicing, an initial step in reforming the U4/U6-U5 tri-snRNP (small nuclear ribonucleoprotein) that can reassemble into another spliceosome complex; this step involves binding U6 and facilitating the unwinding of the U6 internal stem loop, followed by base-pairing of U6 to U4. The sequence is that of U4/U6 snRNA-associated-splicing factor PRP24 from Ophiostoma ulmi (Dutch elm disease fungus).